Here is a 209-residue protein sequence, read N- to C-terminus: Large ribosomal subunit protein uL3 (209 aa).

Residues 126-148 (HGQSRGPMAHGSRYHRRPGSMGP) form a disordered region.

It belongs to the universal ribosomal protein uL3 family. In terms of assembly, part of the 50S ribosomal subunit. Forms a cluster with proteins L14 and L19.

One of the primary rRNA binding proteins, it binds directly near the 3'-end of the 23S rRNA, where it nucleates assembly of the 50S subunit. In Listeria innocua serovar 6a (strain ATCC BAA-680 / CLIP 11262), this protein is Large ribosomal subunit protein uL3.